The primary structure comprises 69 residues: Large ribosomal subunit protein uL29 (69 aa).

Belongs to the universal ribosomal protein uL29 family.

The protein is Large ribosomal subunit protein uL29 of Granulibacter bethesdensis (strain ATCC BAA-1260 / CGDNIH1).